The primary structure comprises 202 residues: UPF0301 protein Meso_0753 (202 aa).

It belongs to the UPF0301 (AlgH) family.

This chain is UPF0301 protein Meso_0753, found in Chelativorans sp. (strain BNC1).